Reading from the N-terminus, the 311-residue chain is Aspartate carbamoyltransferase catalytic subunit (311 aa).

Carbamoyl phosphate is bound by residues arginine 59 and threonine 60. Lysine 87 serves as a coordination point for L-aspartate. Carbamoyl phosphate is bound by residues arginine 109, histidine 139, and glutamine 142. The L-aspartate site is built by arginine 172 and arginine 224. Residues alanine 265 and proline 266 each coordinate carbamoyl phosphate.

The protein belongs to the aspartate/ornithine carbamoyltransferase superfamily. ATCase family. In terms of assembly, heterododecamer (2C3:3R2) of six catalytic PyrB chains organized as two trimers (C3), and six regulatory PyrI chains organized as three dimers (R2).

The enzyme catalyses carbamoyl phosphate + L-aspartate = N-carbamoyl-L-aspartate + phosphate + H(+). Its pathway is pyrimidine metabolism; UMP biosynthesis via de novo pathway; (S)-dihydroorotate from bicarbonate: step 2/3. Its function is as follows. Catalyzes the condensation of carbamoyl phosphate and aspartate to form carbamoyl aspartate and inorganic phosphate, the committed step in the de novo pyrimidine nucleotide biosynthesis pathway. The chain is Aspartate carbamoyltransferase catalytic subunit from Streptococcus pyogenes serotype M18 (strain MGAS8232).